The chain runs to 206 residues: Large ribosomal subunit protein uL4 (206 aa).

The tract at residues 47 to 79 (GTKGQKNRSAVRGGGAKPWAQKGSGRARAGTSR) is disordered. Over residues 69–79 (GSGRARAGTSR) the composition is skewed to low complexity.

It belongs to the universal ribosomal protein uL4 family. In terms of assembly, part of the 50S ribosomal subunit.

One of the primary rRNA binding proteins, this protein initially binds near the 5'-end of the 23S rRNA. It is important during the early stages of 50S assembly. It makes multiple contacts with different domains of the 23S rRNA in the assembled 50S subunit and ribosome. Functionally, forms part of the polypeptide exit tunnel. This chain is Large ribosomal subunit protein uL4, found in Hydrogenovibrio crunogenus (strain DSM 25203 / XCL-2) (Thiomicrospira crunogena).